Consider the following 239-residue polypeptide: Phosphothreonine lyase OspF (239 aa).

The active-site Proton donor is His104. Catalysis depends on Lys134, which acts as the Proton acceptor.

It belongs to the phosphothreonine lyase family.

It is found in the secreted. Functionally, catalyzes the removal of the phosphate group from the phosphothreonine in the mitogen-activated protein kinases such as MAPK2/ERK2, MAPK3/ERK1, MAPK8 and MAPK14 in an irreversible reaction, thus preventing the downstream phosphorylation of histone H3. This epigenetic modification results in inhibition of the transcription of a specific subset of pro-inflammatory genes, and ultimately to a reduced immune response against the invading pathogen. The diminished immune response enhances the bacterium's ability to disseminate and multiply within the host. This Shigella sonnei (strain Ss046) protein is Phosphothreonine lyase OspF (ospF).